The chain runs to 637 residues: Probable potassium transport system protein Kup (637 aa).

The next 12 helical transmembrane spans lie at 24–44, 64–84, 113–133, 151–171, 182–202, 225–245, 261–281, 290–310, 351–371, 381–401, 409–429, and 433–453; these read LAIAAIGVVFGDIGTSPLYAL, VISLLFWAIILVVGIKYLLFV, AGALMALGIFGACMFYGDAVI, PHLSHLVLPITIVILIALFWI, LFGPIMVVWFVVIAALGVYHI, LLQAYVVLGSVVLVLTGAEAL, AYGLVMPSLVLNYFGQGALLI, PFFLLAPEWALLPLVVLSTVA, IYVPVVNWLLLFVILCIVIGF, YGIAVTATMVITTVLACVVMV, LLVGAIIAIFLAIDLGFFGAN, and VAQGGWLPLGIGALLFFLLMT.

This sequence belongs to the HAK/KUP transporter (TC 2.A.72) family.

The protein resides in the cell inner membrane. The catalysed reaction is K(+)(in) + H(+)(in) = K(+)(out) + H(+)(out). In terms of biological role, transport of potassium into the cell. Likely operates as a K(+):H(+) symporter. This is Probable potassium transport system protein Kup from Burkholderia ambifaria (strain MC40-6).